The primary structure comprises 100 residues: Urease subunit gamma (100 aa).

This sequence belongs to the urease gamma subunit family. As to quaternary structure, heterotrimer of UreA (gamma), UreB (beta) and UreC (alpha) subunits. Three heterotrimers associate to form the active enzyme.

It localises to the cytoplasm. It carries out the reaction urea + 2 H2O + H(+) = hydrogencarbonate + 2 NH4(+). Its pathway is nitrogen metabolism; urea degradation; CO(2) and NH(3) from urea (urease route): step 1/1. The sequence is that of Urease subunit gamma from Variovorax paradoxus (strain S110).